We begin with the raw amino-acid sequence, 327 residues long: Pectate lyase A (327 aa).

A signal peptide spans 1 to 19 (MQNLKFLIAAVSCLGPALA). N-linked (GlcNAc...) asparagine glycosylation is present at Asn-99. Ca(2+) is bound by residues Asp-140, Asp-169, and Asp-173. Arg-226 is a catalytic residue.

This sequence belongs to the polysaccharide lyase 1 family. The cofactor is Ca(2+).

It localises to the secreted. The enzyme catalyses Eliminative cleavage of (1-&gt;4)-alpha-D-galacturonan to give oligosaccharides with 4-deoxy-alpha-D-galact-4-enuronosyl groups at their non-reducing ends.. In terms of biological role, pectinolytic enzyme consist of four classes of enzymes: pectin lyase, polygalacturonase, pectin methylesterase and rhamnogalacturonase. Among pectinolytic enzymes, pectin lyase is the most important in depolymerization of pectin, since it cleaves internal glycosidic bonds of highly methylated pectins. Favors pectate, the anion, over pectin, the methyl ester. The chain is Pectate lyase A (plyA) from Emericella nidulans (strain FGSC A4 / ATCC 38163 / CBS 112.46 / NRRL 194 / M139) (Aspergillus nidulans).